Consider the following 233-residue polypeptide: Small ribosomal subunit protein uS2c (233 aa).

This sequence belongs to the universal ribosomal protein uS2 family.

It is found in the plastid. Its subcellular location is the cyanelle. This chain is Small ribosomal subunit protein uS2c (rps2), found in Cyanophora paradoxa.